Reading from the N-terminus, the 492-residue chain is 3,6-anhydro-alpha-L-galactose dehydrogenase (492 aa).

Residues 160–161, 184–187, and 237–238 each bind NADP(+); these read WN, KPSE, and GS. E259 serves as the catalytic Proton acceptor. NADP(+) is bound at residue L260. Catalysis depends on C293, which acts as the Nucleophile. E394 is an NADP(+) binding site.

It belongs to the aldehyde dehydrogenase family.

It carries out the reaction 3,6-anhydro-alpha-L-galactopyranose + NADP(+) + H2O = 3,6-anhydro-L-galactonate + NADPH + 2 H(+). Its activity is regulated as follows. Significantly inhibited by EDTA. Activity is enhanced by Fe(2+), but is strongly inhibited by Mn(2+), Cu(2+), Zn(2+), Ni(2+) and Co(2+). Functionally, involved in the degradation of 3,6-anhydro-L-galactose, which is the major monomeric sugar of red macroalgae. Catalyzes the oxidation of 3,6-anhydro-L-galactose (AHG) to form 3,6-anhydrogalactonate (AHGA). Shows broad substrate specificity, with maximum activity toward AHG. The enzyme activities toward D-fructose, D-galactose and D-ribose are between 40% and 50% of the maximum, but those toward L-rhamnose, L-glyceraldehyde, D-glyceraldehyde, L-fucose and D-glucose are much lower. This is 3,6-anhydro-alpha-L-galactose dehydrogenase from Streptomyces coelicolor (strain ATCC BAA-471 / A3(2) / M145).